We begin with the raw amino-acid sequence, 382 residues long: Cell division protein FtsZ (382 aa).

GTP-binding positions include 21–25 (GGGSN), 108–110 (GTG), Glu139, Arg143, and Asp187. Residues 322-382 (RAQQQSNFNR…FLRNRRRKSR (61 aa)) form a disordered region. Basic and acidic residues predominate over residues 340 to 352 (KSKEKEAEKKEPR).

Belongs to the FtsZ family. As to quaternary structure, homodimer. Polymerizes to form a dynamic ring structure in a strictly GTP-dependent manner. Interacts directly with several other division proteins.

The protein localises to the cytoplasm. Its function is as follows. Essential cell division protein that forms a contractile ring structure (Z ring) at the future cell division site. The regulation of the ring assembly controls the timing and the location of cell division. One of the functions of the FtsZ ring is to recruit other cell division proteins to the septum to produce a new cell wall between the dividing cells. Binds GTP and shows GTPase activity. The protein is Cell division protein FtsZ of Halalkalibacterium halodurans (strain ATCC BAA-125 / DSM 18197 / FERM 7344 / JCM 9153 / C-125) (Bacillus halodurans).